The chain runs to 197 residues: Pyridoxal 5'-phosphate synthase subunit PdxT (197 aa).

Residue 53–55 (GES) participates in L-glutamine binding. The Nucleophile role is filled by Cys85. L-glutamine is bound by residues Arg114 and 142–143 (IR). Catalysis depends on charge relay system residues His179 and Glu181.

This sequence belongs to the glutaminase PdxT/SNO family. In terms of assembly, in the presence of PdxS, forms a dodecamer of heterodimers. Only shows activity in the heterodimer.

The catalysed reaction is aldehydo-D-ribose 5-phosphate + D-glyceraldehyde 3-phosphate + L-glutamine = pyridoxal 5'-phosphate + L-glutamate + phosphate + 3 H2O + H(+). The enzyme catalyses L-glutamine + H2O = L-glutamate + NH4(+). It participates in cofactor biosynthesis; pyridoxal 5'-phosphate biosynthesis. Functionally, catalyzes the hydrolysis of glutamine to glutamate and ammonia as part of the biosynthesis of pyridoxal 5'-phosphate. The resulting ammonia molecule is channeled to the active site of PdxS. This Pyrococcus furiosus (strain ATCC 43587 / DSM 3638 / JCM 8422 / Vc1) protein is Pyridoxal 5'-phosphate synthase subunit PdxT.